Consider the following 272-residue polypeptide: Type III pantothenate kinase (272 aa).

6 to 13 (NVNNTNTL) contacts ATP. 113-116 (GADR) lines the substrate pocket. Asp-115 (proton acceptor) is an active-site residue. Asp-135 is a binding site for K(+). Thr-138 contributes to the ATP binding site. Thr-190 lines the substrate pocket.

It belongs to the type III pantothenate kinase family. Homodimer. Requires NH4(+) as cofactor. K(+) is required as a cofactor.

The protein resides in the cytoplasm. It carries out the reaction (R)-pantothenate + ATP = (R)-4'-phosphopantothenate + ADP + H(+). The protein operates within cofactor biosynthesis; coenzyme A biosynthesis; CoA from (R)-pantothenate: step 1/5. In terms of biological role, catalyzes the phosphorylation of pantothenate (Pan), the first step in CoA biosynthesis. This is Type III pantothenate kinase from Acidobacterium capsulatum (strain ATCC 51196 / DSM 11244 / BCRC 80197 / JCM 7670 / NBRC 15755 / NCIMB 13165 / 161).